The primary structure comprises 209 residues: MTPRIVVTGTDTDIGKTVFSAGLAGFLQASYWKPVQAGLDGGTDSSRVAALSGLPPQRILPERFRLNTPASPHLAAQIDGVRIELDALDVPQIAGSLVIEGAGGLMVPLNSDTLYIDVFARWNLPVVLCARTALGTINHALLSVEALRRRGIPICGIAFIGDDHRDSEDIICAIGQVRRLGRLPRLDPLDRHTLQAAFKTSFNREDFTS.

13–18 (DIGKTV) contacts ATP. T17 serves as a coordination point for Mg(2+). The active site involves K33. R47 and E100 together coordinate Mg(2+). Residues 100-103 (EGAG) and 184-186 (PRL) contribute to the ATP site.

The protein belongs to the dethiobiotin synthetase family. In terms of assembly, homodimer. Mg(2+) serves as cofactor.

Its subcellular location is the cytoplasm. It carries out the reaction (7R,8S)-7,8-diammoniononanoate + CO2 + ATP = (4R,5S)-dethiobiotin + ADP + phosphate + 3 H(+). Its pathway is cofactor biosynthesis; biotin biosynthesis; biotin from 7,8-diaminononanoate: step 1/2. In terms of biological role, catalyzes a mechanistically unusual reaction, the ATP-dependent insertion of CO2 between the N7 and N8 nitrogen atoms of 7,8-diaminopelargonic acid (DAPA, also called 7,8-diammoniononanoate) to form a ureido ring. The sequence is that of ATP-dependent dethiobiotin synthetase BioD from Rhodopseudomonas palustris (strain BisB18).